A 516-amino-acid polypeptide reads, in one-letter code: MRDHFELRDGDLAGRIGRLSVPRAGVTVETPALLPVVNPNIDTISPARLESEFGAEILITNSYIIKTNDHLREEALDVGLHEMLDFDGAIMTDSGSFQLAEYGEIDTTTEEILQFQRDIGTDIATPVDIPTPPDVAREQAEADLEITRQALADAEAADTGEMLVNAPVQGSTYPDLREEAGRHADATDLDVFPVGAVVPMMNAYRYDDMVDAVAAAKRGLGVDAPVHLFGAGHPMMLALAVALGCDLFDSAAYALYARDGRYLTVRGTEHLEDLDYLPCTCPICTEYSPDDLREKGSKRQEQLLAEHNLHVTFAELRRIKQAIRDGDLMELVEERARSHPAMLDGYRALLAHVDQLEREDPASKGAFFYASNESAHRPEVARHHARMDRLTAEGHVLLTEGGVPSGDDFDATWRVVPPFGPFPRSLSETYPLTAEVPERLDRDAYEQAARGVSRLVEENPDAAFTLAHDDWPESALARVPESVELESLSAVSERLGDEASVGGDDGDDGGSASSAE.

Asp93 serves as the catalytic Nucleophile. Residues Asp128 and Ala196 each coordinate substrate. Cys279, Cys281, and Cys284 together coordinate Zn(2+). Over residues 488 to 502 the composition is skewed to low complexity; the sequence is LSAVSERLGDEASVG. The disordered stretch occupies residues 488-516; that stretch reads LSAVSERLGDEASVGGDDGDDGGSASSAE.

It belongs to the archaeosine tRNA-ribosyltransferase family. Zn(2+) is required as a cofactor.

It carries out the reaction guanosine(15) in tRNA + 7-cyano-7-deazaguanine = 7-cyano-7-carbaguanosine(15) in tRNA + guanine. It functions in the pathway tRNA modification; archaeosine-tRNA biosynthesis. Exchanges the guanine residue with 7-cyano-7-deazaguanine (preQ0) at position 15 in the dihydrouridine loop (D-loop) of archaeal tRNAs. In Haloferax volcanii (strain ATCC 29605 / DSM 3757 / JCM 8879 / NBRC 14742 / NCIMB 2012 / VKM B-1768 / DS2) (Halobacterium volcanii), this protein is tRNA-guanine(15) transglycosylase.